The primary structure comprises 97 residues: Ataxin-7-like protein 3B (97 aa).

The tract at residues S76 to Q97 is disordered. S92 is subject to Phosphoserine.

It belongs to the SGF11 family. As to quaternary structure, interacts strongly with ENY2. Interacts weakly with USP22.

The protein localises to the cytoplasm. Its function is as follows. By binding to ENY2, interferes with the nuclear functions of the deubiquitinase (DUB) module of the SAGA complex which consists of ENY2, ATXN7, ATXN7L3 and the histone deubiquitinating component USP22. Affects USP22 DUB activity toward histones indirectly by changing the subcellular distribution of ENY2 and altering ENY2 availability for ATXN7L3 interaction. Regulates H2B monoubiquitination (H2Bub1) levels through cytoplasmic sequestration of ENY2 resulting in loss of nuclear ENY2-ATXN7L3 association which destabilizes ATXN7L3. Affects protein expression levels of ENY2 and ATXN7L3. This chain is Ataxin-7-like protein 3B (Atxn7l3b), found in Mus musculus (Mouse).